Here is a 725-residue protein sequence, read N- to C-terminus: FYVE, RhoGEF and PH domain-containing protein 3 (725 aa).

The interval 1 to 151 (MESGRGSSTP…KADKDAGLAQ (151 aa)) is disordered. Acidic residues predominate over residues 124 to 136 (EEADSDVGEEPDS). Phosphoserine is present on S128. Residues 157 to 341 (KLLHIAQELL…STAANHSNAA (185 aa)) form the DH domain. One can recognise a PH 1 domain in the interval 370-469 (ELIKEGQIQK…WIQIIQATIE (100 aa)). Positions 487–532 (QDEDPSLSPDMPITSTSPVEPVVTTEGSSGAAGLEPRKLSSKTRRD) are disordered. Residues 500-512 (TSTSPVEPVVTTE) show a composition bias toward low complexity. A compositionally biased stretch (basic and acidic residues) spans 521 to 532 (EPRKLSSKTRRD). An FYVE-type zinc finger spans residues 532–588 (DKEKQSCKSCGETFNSITKRRHHCKLCGAVICGKCSEFKAENSRQSRVCRDCFLTQP). Positions 538, 541, 555, 558, 563, 566, 580, and 583 each coordinate Zn(2+). The region spanning 604–703 (PSLLCGPLRL…WLETLSTAAH (100 aa)) is the PH 2 domain. Positions 703–725 (HGDTAQDSPGALQLQVPMGAAAP) are disordered.

The protein resides in the cytoplasm. Its subcellular location is the cytoskeleton. Its function is as follows. Promotes the formation of filopodia. May activate CDC42, a member of the Ras-like family of Rho- and Rac proteins, by exchanging bound GDP for free GTP. Plays a role in regulating the actin cytoskeleton and cell shape. The chain is FYVE, RhoGEF and PH domain-containing protein 3 (FGD3) from Homo sapiens (Human).